We begin with the raw amino-acid sequence, 288 residues long: Solute carrier family 25 member 47-B (288 aa).

Solcar repeat units lie at residues 1 to 83, 99 to 191, and 199 to 286; these read MHLA…ILQF, AHIF…ICEI, and PGWP…VVRL. Transmembrane regions (helical) follow at residues 3-23, 58-75, 101-121, 175-195, 199-219, and 257-277; these read LADFLAGSVGGAFGVAVGYPL, GMSMPISTVSISSSLVFG, IFLAGFTGGVTQVLVMAPADI, GPSFATYFLTYNTICEILTTE, PGWPVVLLAGGVSGMCGWAVG, and VLFRGLTVNCIRAFPVNMSVF.

The protein belongs to the mitochondrial carrier (TC 2.A.29) family.

It is found in the mitochondrion inner membrane. In Danio rerio (Zebrafish), this protein is Solute carrier family 25 member 47-B (slc25a47b).